The chain runs to 279 residues: Thymidylate synthase (279 aa).

Arg37 serves as a coordination point for dUMP. His67 contacts (6R)-5,10-methylene-5,6,7,8-tetrahydrofolate. 142–143 is a binding site for dUMP; it reads RR. Cys162 (nucleophile) is an active-site residue. Residues 182–185, Asn193, and 223–225 contribute to the dUMP site; these read RSAD and HLY. Asp185 contributes to the (6R)-5,10-methylene-5,6,7,8-tetrahydrofolate binding site. Position 278 (Ser278) interacts with (6R)-5,10-methylene-5,6,7,8-tetrahydrofolate.

This sequence belongs to the thymidylate synthase family. Bacterial-type ThyA subfamily. Homodimer.

The protein localises to the cytoplasm. It catalyses the reaction dUMP + (6R)-5,10-methylene-5,6,7,8-tetrahydrofolate = 7,8-dihydrofolate + dTMP. It functions in the pathway pyrimidine metabolism; dTTP biosynthesis. Catalyzes the reductive methylation of 2'-deoxyuridine-5'-monophosphate (dUMP) to 2'-deoxythymidine-5'-monophosphate (dTMP) while utilizing 5,10-methylenetetrahydrofolate (mTHF) as the methyl donor and reductant in the reaction, yielding dihydrofolate (DHF) as a by-product. This enzymatic reaction provides an intracellular de novo source of dTMP, an essential precursor for DNA biosynthesis. The protein is Thymidylate synthase of Caulobacter vibrioides (strain ATCC 19089 / CIP 103742 / CB 15) (Caulobacter crescentus).